Reading from the N-terminus, the 25-residue chain is Grammistin Pp 3 (25 aa).

This sequence belongs to the grammistin family. Group 3 subfamily. As to quaternary structure, exists as aggregates of 3-4 molecules. As to expression, expressed by the skin glands.

The protein resides in the secreted. Functionally, thanks to its abundant amphiphilic alpha-helices, it may integrate into membrane phospholipids, leading to lysis of the membrane. Has hemolytic activity. Has antibacterial activity with a broad spectrum against various species of bacteria including both Gram-positive and Gram-negative groups. Also has ichthyotoxic activity. The polypeptide is Grammistin Pp 3 (Pogonoperca punctata (Clown grouper)).